The sequence spans 264 residues: MAVGKNKRLTKGGKKGAKKKVVDPFSKKDWYDVKAPAMFNIRNIGKTLVTRTQGTKIASDGLKGRVFEVSLADLQNDEVAFRKFKLITEDVQGKNCLTNFHGMDLTRDKMCSMVKKWQTMIEAHVDVKTTDGYLLRLFCVGFTKKRNNQIRKTSYAQHQQVRQIRKKMMEIMTREVQTNDLKEVVNKLIPDSIGKDIEKACQSIYPLHDVFVRKVKMLKKPKFELGKLMELHGEGSSSGKATGDETGAKVERADGYEPPVQESV.

Lys34 carries the N6-acetyllysine; alternate modification. Residue Lys34 forms a Glycyl lysine isopeptide (Lys-Gly) (interchain with G-Cter in SUMO2); alternate linkage. Lys56 is subject to N6-acetyllysine. Tyr155 bears the ADP-ribosyltyrosine mark. Residues 232–264 are disordered; it reads HGEGSSSGKATGDETGAKVERADGYEPPVQESV. Ser236 and Ser237 each carry phosphoserine. Positions 242–255 are enriched in basic and acidic residues; sequence TGDETGAKVERADG. At Lys249 the chain carries N6-acetyllysine; alternate. Residue Lys249 forms a Glycyl lysine isopeptide (Lys-Gly) (interchain with G-Cter in SUMO2); alternate linkage. At Tyr256 the chain carries Phosphotyrosine. Phosphoserine is present on Ser263.

It belongs to the eukaryotic ribosomal protein eS1 family. Component of the small ribosomal subunit. Mature ribosomes consist of a small (40S) and a large (60S) subunit. The 40S subunit contains about 33 different proteins and 1 molecule of RNA (18S). The 60S subunit contains about 49 different proteins and 3 molecules of RNA (28S, 5.8S and 5S). Identified in a IGF2BP1-dependent mRNP granule complex containing untranslated mRNAs. Binds with high affinity to IPO4. Interacts with DDIT3. Part of the small subunit (SSU) processome, composed of more than 70 proteins and the RNA chaperone small nucleolar RNA (snoRNA) U3. In terms of processing, ADP-ribosylated at Tyr-155 by PARP1 in presence of HPF1.

Its subcellular location is the cytoplasm. It localises to the nucleus. The protein resides in the nucleolus. In terms of biological role, component of the small ribosomal subunit. The ribosome is a large ribonucleoprotein complex responsible for the synthesis of proteins in the cell. Part of the small subunit (SSU) processome, first precursor of the small eukaryotic ribosomal subunit. During the assembly of the SSU processome in the nucleolus, many ribosome biogenesis factors, an RNA chaperone and ribosomal proteins associate with the nascent pre-rRNA and work in concert to generate RNA folding, modifications, rearrangements and cleavage as well as targeted degradation of pre-ribosomal RNA by the RNA exosome. May play a role during erythropoiesis through regulation of transcription factor DDIT3. The protein is Small ribosomal subunit protein eS1 of Bos taurus (Bovine).